A 236-amino-acid polypeptide reads, in one-letter code: Small ribosomal subunit protein uS2 (236 aa).

Belongs to the universal ribosomal protein uS2 family.

The chain is Small ribosomal subunit protein uS2 from Brevibacillus brevis (strain 47 / JCM 6285 / NBRC 100599).